The chain runs to 497 residues: Glycerol kinase (497 aa).

Thr13 contacts ADP. ATP is bound by residues Thr13, Thr14, and Ser15. Thr13 is a binding site for sn-glycerol 3-phosphate. Arg17 is an ADP binding site. Residues Arg83, Glu84, and Tyr135 each coordinate sn-glycerol 3-phosphate. Residues Arg83, Glu84, and Tyr135 each contribute to the glycerol site. His231 bears the Phosphohistidine; by HPr mark. Asp245 lines the sn-glycerol 3-phosphate pocket. Asp245 and Gln246 together coordinate glycerol. ADP is bound by residues Thr267 and Gly310. ATP-binding residues include Thr267, Gly310, Gln314, and Gly411. ADP-binding residues include Gly411 and Asn415.

The protein belongs to the FGGY kinase family. In terms of assembly, homotetramer and homodimer (in equilibrium). In terms of processing, the phosphoenolpyruvate-dependent sugar phosphotransferase system (PTS), including enzyme I, and histidine-containing protein (HPr) are required for the phosphorylation, which leads to the activation of the enzyme.

The catalysed reaction is glycerol + ATP = sn-glycerol 3-phosphate + ADP + H(+). The protein operates within polyol metabolism; glycerol degradation via glycerol kinase pathway; sn-glycerol 3-phosphate from glycerol: step 1/1. With respect to regulation, activated by phosphorylation and inhibited by fructose 1,6-bisphosphate (FBP). In terms of biological role, key enzyme in the regulation of glycerol uptake and metabolism. Catalyzes the phosphorylation of glycerol to yield sn-glycerol 3-phosphate. In Listeria monocytogenes serovar 1/2a (strain ATCC BAA-679 / EGD-e), this protein is Glycerol kinase.